The primary structure comprises 1123 residues: Polyprotein of EF-Ts, chloroplastic (1123 aa).

The N-terminal 73 residues, methionine 1–serine 73, are a transit peptide targeting the chloroplast. The interval arginine 68–valine 141 is disordered. Residues threonine 94–alanine 103 show a composition bias toward acidic residues. Residues threonine 106–serine 119 are compositionally biased toward low complexity. Residues glycine 143–arginine 212 form the S1 motif 1 domain. The interval threonine 213–threonine 258 is disordered. Over residues glycine 231–arginine 244 the composition is skewed to polar residues. The span at glutamine 245–serine 254 shows a compositional bias: basic and acidic residues. An S1 motif 2 domain is found at glycine 263–lysine 331. Disordered stretches follow at residues lysine 443–threonine 670 and valine 894–lysine 923. Polar residues predominate over residues glutamate 486–phenylalanine 501. A compositionally biased stretch (low complexity) spans serine 551–glutamate 587. Residues lysine 630–isoleucine 639 are compositionally biased toward acidic residues. 2 stretches are compositionally biased toward low complexity: residues alanine 657–threonine 670 and valine 894–proline 903. The segment covering proline 908–lysine 923 has biased composition (basic and acidic residues).

Belongs to the EF-Ts family. As to quaternary structure, component of the chloroplast ribosome 30S and 70S subunits, as well as polysomes. Component of the chloroplast ribosome 70S subunit, and at low levels, present in polysomes. In terms of assembly, associates transiently with chloroplast polysomes.

It localises to the plastid. Its subcellular location is the chloroplast. Functionally, associates with the EF-Tu.GDP complex and induces the exchange of GDP to GTP. It remains bound to the aminoacyl-tRNA.EF-Tu.GTP complex up to the GTP hydrolysis stage on the ribosome. Its function is as follows. Binds to psbD and psbA 5'-untranslated regions (UTRs) in vitro. This chain is Polyprotein of EF-Ts, chloroplastic, found in Oryza sativa subsp. indica (Rice).